The following is a 205-amino-acid chain: MALLDLGLESTAVPRIRVFDQQRAEAAIRELLYAIGEDPDREGLADTPARVARACRELFSGLYTDPQTVLNTMFDEEHNELVIVKEIPMYSTCEHHLVSFHGVAHIGYLPGADGRVTGLSKIARLVDLYAKRPQVQERLTSQIADALVSKLDPRGVIIVVEAEHLCMAMRGVRKPGAITTTSAVRGQFKTDAASRAEALGLILRK.

3 residues coordinate Zn(2+): Cys93, His96, and Cys166.

This sequence belongs to the GTP cyclohydrolase I family. Homomer.

The catalysed reaction is GTP + H2O = 7,8-dihydroneopterin 3'-triphosphate + formate + H(+). Its pathway is cofactor biosynthesis; 7,8-dihydroneopterin triphosphate biosynthesis; 7,8-dihydroneopterin triphosphate from GTP: step 1/1. The chain is GTP cyclohydrolase 1 from Mycobacterium leprae (strain Br4923).